The sequence spans 102 residues: Large ribosomal subunit protein uL24 (102 aa).

It belongs to the universal ribosomal protein uL24 family. Part of the 50S ribosomal subunit.

One of two assembly initiator proteins, it binds directly to the 5'-end of the 23S rRNA, where it nucleates assembly of the 50S subunit. Functionally, one of the proteins that surrounds the polypeptide exit tunnel on the outside of the subunit. The sequence is that of Large ribosomal subunit protein uL24 from Allorhizobium ampelinum (strain ATCC BAA-846 / DSM 112012 / S4) (Agrobacterium vitis (strain S4)).